The chain runs to 499 residues: Putative protease Do-like 12, mitochondrial (499 aa).

A mitochondrion-targeting transit peptide spans 1 to 24 (MLFRSCVGMVSRYSRALLPTITIS). The tract at residues 94–259 (GGSGFAIAGK…IPTPIIRHFI (166 aa)) is serine protease. Catalysis depends on charge relay system residues histidine 110, aspartate 144, and serine 222. The region spanning 272–356 (GSLVLSCQSM…DENILVKVLR (85 aa)) is the PDZ domain.

Belongs to the peptidase S1C family.

It localises to the mitochondrion matrix. In terms of biological role, putative serine protease. This Arabidopsis thaliana (Mouse-ear cress) protein is Putative protease Do-like 12, mitochondrial (DEGP12).